A 342-amino-acid polypeptide reads, in one-letter code: Holliday junction branch migration complex subunit RuvB (342 aa).

The tract at residues 1–179 (MTNILSPEKS…FGIPMRLNFY (179 aa)) is large ATPase domain (RuvB-L). ATP contacts are provided by residues Ile18, Arg19, Gly60, Lys63, Thr64, Thr65, 126–128 (EDF), Arg169, Tyr179, and Arg216. Thr64 provides a ligand contact to Mg(2+). Residues 180-250 (NTEELKKVLN…VSDFGLNRLE (71 aa)) form a small ATPAse domain (RuvB-S) region. Residues 253–342 (RIGLDSNDYR…HQFNIFNENE (90 aa)) are head domain (RuvB-H). DNA-binding residues include Arg289, Arg308, and Arg313.

This sequence belongs to the RuvB family. In terms of assembly, homohexamer. Forms an RuvA(8)-RuvB(12)-Holliday junction (HJ) complex. HJ DNA is sandwiched between 2 RuvA tetramers; dsDNA enters through RuvA and exits via RuvB. An RuvB hexamer assembles on each DNA strand where it exits the tetramer. Each RuvB hexamer is contacted by two RuvA subunits (via domain III) on 2 adjacent RuvB subunits; this complex drives branch migration. In the full resolvosome a probable DNA-RuvA(4)-RuvB(12)-RuvC(2) complex forms which resolves the HJ.

Its subcellular location is the cytoplasm. It carries out the reaction ATP + H2O = ADP + phosphate + H(+). In terms of biological role, the RuvA-RuvB-RuvC complex processes Holliday junction (HJ) DNA during genetic recombination and DNA repair, while the RuvA-RuvB complex plays an important role in the rescue of blocked DNA replication forks via replication fork reversal (RFR). RuvA specifically binds to HJ cruciform DNA, conferring on it an open structure. The RuvB hexamer acts as an ATP-dependent pump, pulling dsDNA into and through the RuvAB complex. RuvB forms 2 homohexamers on either side of HJ DNA bound by 1 or 2 RuvA tetramers; 4 subunits per hexamer contact DNA at a time. Coordinated motions by a converter formed by DNA-disengaged RuvB subunits stimulates ATP hydrolysis and nucleotide exchange. Immobilization of the converter enables RuvB to convert the ATP-contained energy into a lever motion, pulling 2 nucleotides of DNA out of the RuvA tetramer per ATP hydrolyzed, thus driving DNA branch migration. The RuvB motors rotate together with the DNA substrate, which together with the progressing nucleotide cycle form the mechanistic basis for DNA recombination by continuous HJ branch migration. Branch migration allows RuvC to scan DNA until it finds its consensus sequence, where it cleaves and resolves cruciform DNA. The chain is Holliday junction branch migration complex subunit RuvB from Rickettsia rickettsii (strain Sheila Smith).